Reading from the N-terminus, the 241-residue chain is Probable transcriptional regulatory protein SAR11_0592 (241 aa).

The tract at residues 1-24 is disordered; it reads MSGHSKWASIKHSKGKADKQRSKV.

The protein belongs to the TACO1 family.

The protein resides in the cytoplasm. The chain is Probable transcriptional regulatory protein SAR11_0592 from Pelagibacter ubique (strain HTCC1062).